Reading from the N-terminus, the 269-residue chain is Embryonic polyadenylate-binding protein 2 (269 aa).

Residues 26–54 (EAQGWGAWGRTEKTSLVPSAGSDKEAEEN) form a disordered region. Residues 139 to 216 (RSVYVGNVDY…RVIKVLPKRT (78 aa)) form the RRM domain. The tract at residues 240–269 (LQGSLQRKPRLRPHGQSRGRGRASPWFSPY) is disordered. A compositionally biased stretch (basic residues) spans 246–260 (RKPRLRPHGQSRGRG).

It is found in the cytoplasm. Functionally, binds the poly(A) tail of mRNA. The protein is Embryonic polyadenylate-binding protein 2 (Pabpn1l) of Rattus norvegicus (Rat).